Reading from the N-terminus, the 208-residue chain is 3-demethoxyubiquinol 3-hydroxylase (208 aa).

Glu-57, Glu-87, His-90, Glu-139, Glu-171, and His-174 together coordinate Fe cation.

Belongs to the COQ7 family. It depends on Fe cation as a cofactor.

Its subcellular location is the cell membrane. It catalyses the reaction a 5-methoxy-2-methyl-3-(all-trans-polyprenyl)benzene-1,4-diol + AH2 + O2 = a 3-demethylubiquinol + A + H2O. The protein operates within cofactor biosynthesis; ubiquinone biosynthesis. Functionally, catalyzes the hydroxylation of 2-nonaprenyl-3-methyl-6-methoxy-1,4-benzoquinol during ubiquinone biosynthesis. The chain is 3-demethoxyubiquinol 3-hydroxylase from Nitrosomonas eutropha (strain DSM 101675 / C91 / Nm57).